The following is a 257-amino-acid chain: Putative hydro-lyase Bamb_5282 (257 aa).

This sequence belongs to the D-glutamate cyclase family.

The protein is Putative hydro-lyase Bamb_5282 of Burkholderia ambifaria (strain ATCC BAA-244 / DSM 16087 / CCUG 44356 / LMG 19182 / AMMD) (Burkholderia cepacia (strain AMMD)).